The primary structure comprises 263 residues: DSGLGKTHLLKAIAHEIGNTKNKLVVKYYTSSDFRKEIVDSLQDGFKEIESTKEKLSKIDVLLIDDIQFLANSGKTNEIFFNLFNFFIENNKQIVLTSDKFPEQLNGFDKRLVSRFSQGLNVKVETPDIITAINIVDYKAKIVNLNLSEESKKYIASFFGSDVRKIEGIINKIEFSIIQDNSAAPKIIELEDINKFLEDYSFAPGGEITVQKIKNVVAQNYGISVKSIDSRLRMANIVKARHVAMFLTGEILKKNYSEIGVAF.

A region of interest (domain I, interacts with DnaA modulators) is located at residue Asp-1. Residue Asp-1 is a region of interest, domain II. Residues 1–177 (DSGLGKTHLL…GIINKIEFSI (177 aa)) are domain III, AAA+ region. Residues Gly-3, Gly-5, Lys-6, and Thr-7 each coordinate ATP. Residues 178-263 (IQDNSAAPKI…KNYSEIGVAF (86 aa)) form a domain IV, binds dsDNA region.

Belongs to the DnaA family. As to quaternary structure, oligomerizes as a right-handed, spiral filament on DNA at oriC.

Its subcellular location is the cytoplasm. Functionally, plays an essential role in the initiation and regulation of chromosomal replication. ATP-DnaA binds to the origin of replication (oriC) to initiate formation of the DNA replication initiation complex once per cell cycle. Binds the DnaA box (a 9 base pair repeat at the origin) and separates the double-stranded (ds)DNA. Forms a right-handed helical filament on oriC DNA; dsDNA binds to the exterior of the filament while single-stranded (ss)DNA is stabiized in the filament's interior. The ATP-DnaA-oriC complex binds and stabilizes one strand of the AT-rich DNA unwinding element (DUE), permitting loading of DNA polymerase. After initiation quickly degrades to an ADP-DnaA complex that is not apt for DNA replication. Binds acidic phospholipids. The chain is Chromosomal replication initiator protein DnaA from Spiroplasma apis.